A 186-amino-acid chain; its full sequence is Peptidyl-tRNA hydrolase (186 aa).

Residue Y14 coordinates tRNA. Residue H19 is the Proton acceptor of the active site. Positions 64, 66, and 112 each coordinate tRNA.

Belongs to the PTH family. As to quaternary structure, monomer.

The protein localises to the cytoplasm. It catalyses the reaction an N-acyl-L-alpha-aminoacyl-tRNA + H2O = an N-acyl-L-amino acid + a tRNA + H(+). Hydrolyzes ribosome-free peptidyl-tRNAs (with 1 or more amino acids incorporated), which drop off the ribosome during protein synthesis, or as a result of ribosome stalling. Functionally, catalyzes the release of premature peptidyl moieties from peptidyl-tRNA molecules trapped in stalled 50S ribosomal subunits, and thus maintains levels of free tRNAs and 50S ribosomes. The protein is Peptidyl-tRNA hydrolase of Mycoplasma capricolum subsp. capricolum (strain California kid / ATCC 27343 / NCTC 10154).